Reading from the N-terminus, the 108-residue chain is MDQLLDVETLKKLSPEQQEQVISGVKQQAALANAQNLVTDISEKCTNKCITAPGSSLASGEKQCLQRCMDRFMESWNLVSQTLQKRLQEEMASSGGMGGGFGQGPSFS.

Positions 45–68 match the Twin CX3C motif motif; that stretch reads CTNKCITAPGSSLASGEKQCLQRC. Intrachain disulfides connect Cys-45–Cys-68 and Cys-49–Cys-64. The disordered stretch occupies residues 89–108; that stretch reads EEMASSGGMGGGFGQGPSFS. Positions 95–108 are enriched in gly residues; the sequence is GGMGGGFGQGPSFS.

The protein belongs to the small Tim family. As to quaternary structure, heterohexamer; composed of 3 copies of tim-8/ddp-1 and 3 copies of tin-13/tim-13, named soluble 70 kDa complex. Associates with the TIM22 complex, whose core is composed of tim-22.

It is found in the mitochondrion inner membrane. Mitochondrial intermembrane chaperone that participates in the import and insertion of some multi-pass transmembrane proteins into the mitochondrial inner membrane. Also required for the transfer of beta-barrel precursors from the TOM complex to the sorting and assembly machinery (SAM complex) of the outer membrane. Acts as a chaperone-like protein that protects the hydrophobic precursors from aggregation and guide them through the mitochondrial intermembrane space. The tim-8-tim-13 complex mediates the import of some proteins while the predominant tim-9/tin-9.1-tim-10/tin-10 70 kDa complex mediates the import of much more proteins. In Caenorhabditis elegans, this protein is Mitochondrial import inner membrane translocase subunit tim-13 (tin-13).